The chain runs to 215 residues: Octanoyltransferase (215 aa).

The BPL/LPL catalytic domain occupies 31-206; sequence PDSQDEIWLV…QLVKHLDYAE (176 aa). Substrate is bound by residues 70 to 77, 137 to 139, and 150 to 152; these read RGGQVTYH, SLG, and GLA. Cys168 acts as the Acyl-thioester intermediate in catalysis.

The protein belongs to the LipB family.

It localises to the cytoplasm. The enzyme catalyses octanoyl-[ACP] + L-lysyl-[protein] = N(6)-octanoyl-L-lysyl-[protein] + holo-[ACP] + H(+). It functions in the pathway protein modification; protein lipoylation via endogenous pathway; protein N(6)-(lipoyl)lysine from octanoyl-[acyl-carrier-protein]: step 1/2. Its function is as follows. Catalyzes the transfer of endogenously produced octanoic acid from octanoyl-acyl-carrier-protein onto the lipoyl domains of lipoate-dependent enzymes. Lipoyl-ACP can also act as a substrate although octanoyl-ACP is likely to be the physiological substrate. The polypeptide is Octanoyltransferase (Pseudomonas putida (strain GB-1)).